The following is a 330-amino-acid chain: Ketol-acid reductoisomerase (NADP(+)) (330 aa).

Residues 1 to 182 (MKKVYYDQDA…GCTRAGVFET (182 aa)) form the KARI N-terminal Rossmann domain. NADP(+) is bound by residues 25 to 28 (YGSQ), Ser51, Ser53, and 83 to 86 (DQIQ). Residue His108 is part of the active site. Gly134 is a binding site for NADP(+). The 146-residue stretch at 183–328 (TFKEETETDL…AELRQMMPWL (146 aa)) folds into the KARI C-terminal knotted domain. Mg(2+)-binding residues include Asp191, Glu195, Glu227, and Glu231. Ser252 lines the substrate pocket.

This sequence belongs to the ketol-acid reductoisomerase family. Mg(2+) is required as a cofactor.

The catalysed reaction is (2R)-2,3-dihydroxy-3-methylbutanoate + NADP(+) = (2S)-2-acetolactate + NADPH + H(+). It carries out the reaction (2R,3R)-2,3-dihydroxy-3-methylpentanoate + NADP(+) = (S)-2-ethyl-2-hydroxy-3-oxobutanoate + NADPH + H(+). The protein operates within amino-acid biosynthesis; L-isoleucine biosynthesis; L-isoleucine from 2-oxobutanoate: step 2/4. It participates in amino-acid biosynthesis; L-valine biosynthesis; L-valine from pyruvate: step 2/4. Its function is as follows. Involved in the biosynthesis of branched-chain amino acids (BCAA). Catalyzes an alkyl-migration followed by a ketol-acid reduction of (S)-2-acetolactate (S2AL) to yield (R)-2,3-dihydroxy-isovalerate. In the isomerase reaction, S2AL is rearranged via a Mg-dependent methyl migration to produce 3-hydroxy-3-methyl-2-ketobutyrate (HMKB). In the reductase reaction, this 2-ketoacid undergoes a metal-dependent reduction by NADPH to yield (R)-2,3-dihydroxy-isovalerate. In Carboxydothermus hydrogenoformans (strain ATCC BAA-161 / DSM 6008 / Z-2901), this protein is Ketol-acid reductoisomerase (NADP(+)).